Here is a 329-residue protein sequence, read N- to C-terminus: Capsular polysaccharide phosphotransferase WcwK (329 aa).

It belongs to the stealth family.

This chain is Capsular polysaccharide phosphotransferase WcwK (wcwK), found in Streptococcus pneumoniae.